We begin with the raw amino-acid sequence, 278 residues long: GTPase Era (278 aa).

One can recognise an Era-type G domain in the interval 7-168; the sequence is YCGYIAIVGK…ENLIYPYLPN (162 aa). Positions 15-22 are G1; the sequence is GKPNVGKS. 15–22 contributes to the GTP binding site; that stretch reads GKPNVGKS. Residues 41–45 are G2; sequence NTTQK. Positions 62–65 are G3; that stretch reads DTPG. GTP is bound by residues 62–66 and 117–120; these read DTPGI and NKID. Residues 117 to 120 form a G4 region; the sequence is NKID. The tract at residues 147–149 is G5; sequence ISA. Residues 199-276 enclose the KH type-2 domain; it reads LRDELPSIIT…YLIIWVKVKI (78 aa).

This sequence belongs to the TRAFAC class TrmE-Era-EngA-EngB-Septin-like GTPase superfamily. Era GTPase family. Monomer.

It localises to the cytoplasm. The protein localises to the cell membrane. Functionally, an essential GTPase that binds both GDP and GTP, with rapid nucleotide exchange. Plays a role in 16S rRNA processing and 30S ribosomal subunit biogenesis and possibly also in cell cycle regulation and energy metabolism. The polypeptide is GTPase Era (Buchnera aphidicola subsp. Schizaphis graminum (strain Sg)).